Consider the following 138-residue polypeptide: Large ribosomal subunit protein bL17 (138 aa).

This sequence belongs to the bacterial ribosomal protein bL17 family. As to quaternary structure, part of the 50S ribosomal subunit. Contacts protein L32.

This Phenylobacterium zucineum (strain HLK1) protein is Large ribosomal subunit protein bL17.